The following is an 82-amino-acid chain: MVTIRLARHGAKKRPFYQIVVADSRFKATGRYIEKVGFFNPTAQGQEEGLRLDLDRVGHWVEQGAGLSDRVAKLVKDAKKAA.

This sequence belongs to the bacterial ribosomal protein bS16 family.

This is Small ribosomal subunit protein bS16 from Aliivibrio fischeri (strain ATCC 700601 / ES114) (Vibrio fischeri).